The chain runs to 469 residues: Programmed cell death protein 4 (469 aa).

The residue at position 1 (methionine 1) is an N-acetylmethionine. The span at 1-23 (MDIENEQTLNVNPTDPDNLSDSL) shows a compositional bias: polar residues. Disordered stretches follow at residues 1-37 (MDIENEQTLNVNPTDPDNLSDSLFSGDEENAGTEEIK) and 58-128 (KAKR…GTPG). Serine 25 carries the post-translational modification Phosphoserine. Residues 58 to 64 (KAKRRLR) carry the Nuclear localization signal motif. A Phosphoserine; by PKB and RPS6KB1 modification is found at serine 67. Residues serine 68, serine 71, serine 76, serine 78, and serine 94 each carry the phosphoserine modification. Residues 70–76 (DSGRGDS) carry the Phosphodegron motif. Residues 114–125 (KKGGAGGKGVWG) are compositionally biased toward gly residues. Tyrosine 152 bears the Phosphotyrosine mark. Residues 163 to 284 (AFEKTLTPII…CNTYIDSYKG (122 aa)) form the MI 1 domain. Serine 313 and serine 317 each carry phosphoserine. Residues 326–449 (HLVKEIDMLL…SKQLRDLCPS (124 aa)) enclose the MI 2 domain. A Nuclear localization signal motif is present at residues 448–454 (PSRGRKR). Serine 457 is modified (phosphoserine; by PKB).

It belongs to the PDCD4 family. As to quaternary structure, interacts (via MI domains) with EIF4A1 and EIF4A2 (via N-terminal domain). Heterotrimer with EIF4A1; one molecule of PDCD4 binds two molecules of EIF4A1. Interacts with EIF4G1. May form a complex with EIF4A1 and EIF4G1. The interaction between PDCD4 and EIF4A1 interferes with the interaction between EIF4A1 and EIF4G. When phosphorylated, interacts with BTRC and FBXW11. Post-translationally, polyubiquitinated, leading to its proteasomal degradation. Rapidly degraded in response to mitogens. Phosphorylation of the phosphodegron promotes interaction with BTRC and proteasomal degradation. Phosphorylated at Ser-67 by RPS6KB1 in response to mitogens; phosphorylation promotes proteasomal degradation of PDCD4. In terms of tissue distribution, expressed ubiquitously. Highyly expressed in thymus and liver. Moderately expressed in brain, kidney and spleen; weakly in lung and heart. Expression is up- or down-regulated in response to apoptosis inducers. Regulated by many programmed cell death-inducing stimuli.

The protein localises to the nucleus. It is found in the cytoplasm. Inhibits translation initiation and cap-dependent translation. May excert its function by hindering the interaction between EIF4A1 and EIF4G. Inhibits the helicase activity of EIF4A. Modulates the activation of JUN kinase. Down-regulates the expression of MAP4K1, thus inhibiting events important in driving invasion, namely, MAPK85 activation and consequent JUN-dependent transcription. May play a role in apoptosis. Tumor suppressor. Inhibits tumor promoter-induced neoplastic transformation. Binds RNA. This is Programmed cell death protein 4 (Pdcd4) from Mus musculus (Mouse).